We begin with the raw amino-acid sequence, 442 residues long: NAD kinase 2, mitochondrial (442 aa).

Residues Met1–Ala62 constitute a mitochondrion transit peptide. Residues Arg24–Arg36 are compositionally biased toward low complexity. The disordered stretch occupies residues Arg24 to Ser60. An N6-acetyllysine; alternate modification is found at Lys76. An N6-succinyllysine; alternate modification is found at Lys76. Residue Ser188 is modified to Phosphoserine. At Lys302 the chain carries N6-succinyllysine. N6-acetyllysine; alternate is present on Lys317. Lys317 is modified (N6-succinyllysine; alternate). Phosphoserine is present on Ser367. Residue Lys397 is modified to N6-acetyllysine.

It belongs to the NAD kinase family. As to quaternary structure, homodimer. As to expression, widely expressed.

It localises to the mitochondrion. The catalysed reaction is NAD(+) + ATP = ADP + NADP(+) + H(+). Inhibited by NADH, NADPH and NADP(+). Functionally, mitochondrial NAD(+) kinase that phosphorylates NAD(+) to yield NADP(+). Can use both ATP or inorganic polyphosphate as the phosphoryl donor. Also has weak NADH kinase activity in vitro; however NADH kinase activity is much weaker than the NAD(+) kinase activity and may not be relevant in vivo. The sequence is that of NAD kinase 2, mitochondrial (NADK2) from Homo sapiens (Human).